The sequence spans 88 residues: UPF0250 protein Sfri_0694 (88 aa).

This sequence belongs to the UPF0250 family.

The sequence is that of UPF0250 protein Sfri_0694 from Shewanella frigidimarina (strain NCIMB 400).